A 395-amino-acid chain; its full sequence is S-adenosylmethionine synthase (395 aa).

H12 is a binding site for ATP. D14 is a Mg(2+) binding site. E40 is a binding site for K(+). L-methionine-binding residues include E53 and Q96. The segment at 96 to 106 is flexible loop; it reads QSKEIADAVNF. ATP is bound by residues 174 to 176, 242 to 243, D251, 257 to 258, A274, and K278; these read DGK, RF, and RK. D251 is a binding site for L-methionine. L-methionine is bound at residue K282.

This sequence belongs to the AdoMet synthase family. As to quaternary structure, homotetramer; dimer of dimers. Requires Mg(2+) as cofactor. K(+) serves as cofactor.

The protein localises to the cytoplasm. It catalyses the reaction L-methionine + ATP + H2O = S-adenosyl-L-methionine + phosphate + diphosphate. It functions in the pathway amino-acid biosynthesis; S-adenosyl-L-methionine biosynthesis; S-adenosyl-L-methionine from L-methionine: step 1/1. Functionally, catalyzes the formation of S-adenosylmethionine (AdoMet) from methionine and ATP. The overall synthetic reaction is composed of two sequential steps, AdoMet formation and the subsequent tripolyphosphate hydrolysis which occurs prior to release of AdoMet from the enzyme. The chain is S-adenosylmethionine synthase from Tropheryma whipplei (strain TW08/27) (Whipple's bacillus).